Reading from the N-terminus, the 393-residue chain is Elongation factor Tu (393 aa).

The 194-residue stretch at 10 to 203 (KPHVNIGTIG…AVDDYIPEPV (194 aa)) folds into the tr-type G domain. The segment at 19–26 (GHVDHGKT) is G1. 19–26 (GHVDHGKT) is a GTP binding site. Thr-26 is a binding site for Mg(2+). A G2 region spans residues 60–64 (GITIS). The tract at residues 81-84 (DCPG) is G3. Residues 81–85 (DCPGH) and 136–139 (NKVD) contribute to the GTP site. The G4 stretch occupies residues 136-139 (NKVD). Residues 173–175 (SAL) are G5.

It belongs to the TRAFAC class translation factor GTPase superfamily. Classic translation factor GTPase family. EF-Tu/EF-1A subfamily. In terms of assembly, monomer.

It localises to the cytoplasm. It catalyses the reaction GTP + H2O = GDP + phosphate + H(+). Functionally, GTP hydrolase that promotes the GTP-dependent binding of aminoacyl-tRNA to the A-site of ribosomes during protein biosynthesis. The protein is Elongation factor Tu of Chlorobaculum parvum (strain DSM 263 / NCIMB 8327) (Chlorobium vibrioforme subsp. thiosulfatophilum).